The following is a 295-amino-acid chain: Virginiamycin B lyase (295 aa).

His227 contributes to the substrate binding site. Mg(2+) is bound at residue Glu267. The active-site Proton acceptor is the His269. Glu284 contributes to the Mg(2+) binding site.

The protein belongs to the Vgb family. In terms of assembly, monomer. It depends on Mg(2+) as a cofactor.

In terms of biological role, inactivates the type B streptogramin antibiotics by linearizing the lactone ring at the ester linkage, generating a free phenylglycine carboxylate and converting the threonyl moiety into 2-amino-butenoic acid. The polypeptide is Virginiamycin B lyase (Bacillus licheniformis (strain ATCC 14580 / DSM 13 / JCM 2505 / CCUG 7422 / NBRC 12200 / NCIMB 9375 / NCTC 10341 / NRRL NRS-1264 / Gibson 46)).